The chain runs to 193 residues: MTMRHCWTAGPSSWWVLLLYVHVILARATSAPQTTATVLTGSSKDPCSSWSPAVPTKQYPALDVIWPEKEVPLNGTLTLSCTACSRFPYFSILYWLGNGSFIEHLPGRLKEGHTSREHRNTSTWLHRALVLEELSPTLRSTNFSCLFVDPGQVAQYHIILAQLWDGLKTAPSPSQETLSSHSPVSRSAGPGVA.

A signal peptide spans methionine 1–alanine 28. Positions proline 60 to alanine 161 constitute an Ig-like C2-type domain. N-linked (GlcNAc...) asparagine glycans are attached at residues asparagine 74, asparagine 98, asparagine 120, and asparagine 142. Residues cysteine 81 and cysteine 145 are joined by a disulfide bond. Polar residues predominate over residues serine 172 to serine 185. The disordered stretch occupies residues serine 172–alanine 193.

The protein localises to the secreted. Binds to IL-18 and inhibits its activity. Functions as an inhibitor of the early TH1 cytokine response. The protein is Interleukin-18-binding protein (Il18bp) of Mus musculus (Mouse).